A 66-amino-acid polypeptide reads, in one-letter code: Gallinacin-5 (66 aa).

The N-terminal stretch at 1-19 is a signal peptide; it reads MQILTLLFAVLLLMLRAEP. Positions 20-25 are excised as a propeptide; the sequence is GLSLAR. 3 disulfide bridges follow: cysteine 31–cysteine 59, cysteine 38–cysteine 53, and cysteine 43–cysteine 60.

Belongs to the beta-defensin family. In terms of tissue distribution, strong expression in the tongue and bone marrow. Low expression in the esophagus, trachea, lung, brain and ovary. Expressed in the ovarian stroma, but not in the ovarian follicles.

It localises to the secreted. The protein resides in the cytoplasmic granule. Its function is as follows. Has bactericidal activity. This chain is Gallinacin-5 (GAL5), found in Gallus gallus (Chicken).